The following is a 202-amino-acid chain: FMN reductase (NADH) RutF (202 aa).

Positions 168-191 are enriched in low complexity; sequence PRAPRGGSAPAEPARGARAIGARP. The segment at 168–202 is disordered; that stretch reads PRAPRGGSAPAEPARGARAIGARPPEGPVLALRSA.

This sequence belongs to the non-flavoprotein flavin reductase family. RutF subfamily.

It carries out the reaction FMNH2 + NAD(+) = FMN + NADH + 2 H(+). Its function is as follows. Catalyzes the reduction of FMN to FMNH2 which is used to reduce pyrimidine by RutA via the Rut pathway. This chain is FMN reductase (NADH) RutF, found in Methylorubrum populi (strain ATCC BAA-705 / NCIMB 13946 / BJ001) (Methylobacterium populi).